A 274-amino-acid polypeptide reads, in one-letter code: MKVIMTTKVDKASMNIMNKLIENFGFKETEYVFDGNPVYKRGDVLILTTNDEMIYYDYLDREIENQLGFKPEIIAFASRHSSKQKLPALTTHVTGNWGKAMYGGKDESFAVAIPSAMKLSLLKMSELNDLGWTVCYEATHHGPTELEVPSFFIEIGSSEEEWINDRAGEIIAETIIYVLDNYEKGRSKFKVALGIGGGHYAPKQTKRALEGDLAFGHILPKYAQPVSRDVMIKALNRFGEKVEAIYVDWKGSRGETRQLAKSLAQELGLEFIKD.

It belongs to the DtdA deacylase family. Monomer. The cofactor is Zn(2+).

It catalyses the reaction a D-aminoacyl-tRNA + H2O = a tRNA + a D-alpha-amino acid + H(+). It carries out the reaction glycyl-tRNA(Ala) + H2O = tRNA(Ala) + glycine + H(+). In terms of biological role, D-aminoacyl-tRNA deacylase with broad substrate specificity. By recycling D-aminoacyl-tRNA to D-amino acids and free tRNA molecules, this enzyme counteracts the toxicity associated with the formation of D-aminoacyl-tRNA entities in vivo. In Pyrococcus horikoshii (strain ATCC 700860 / DSM 12428 / JCM 9974 / NBRC 100139 / OT-3), this protein is D-aminoacyl-tRNA deacylase.